The following is a 689-amino-acid chain: Glycine--tRNA ligase beta subunit (689 aa).

Belongs to the class-II aminoacyl-tRNA synthetase family. Tetramer of two alpha and two beta subunits.

Its subcellular location is the cytoplasm. It catalyses the reaction tRNA(Gly) + glycine + ATP = glycyl-tRNA(Gly) + AMP + diphosphate. This Yersinia pseudotuberculosis serotype O:1b (strain IP 31758) protein is Glycine--tRNA ligase beta subunit.